Consider the following 269-residue polypeptide: Regulatory protein RecX (269 aa).

This sequence belongs to the RecX family.

It localises to the cytoplasm. Its function is as follows. Modulates RecA activity. This chain is Regulatory protein RecX, found in Listeria welshimeri serovar 6b (strain ATCC 35897 / DSM 20650 / CCUG 15529 / CIP 8149 / NCTC 11857 / SLCC 5334 / V8).